We begin with the raw amino-acid sequence, 261 residues long: Probable electron transfer flavoprotein subunit beta (261 aa).

S2 carries the post-translational modification N-acetylserine.

It belongs to the ETF beta-subunit/FixA family. In terms of assembly, heterodimer of an alpha and a beta subunit. Interacts with YFH1. Requires FAD as cofactor. It depends on AMP as a cofactor.

It localises to the mitochondrion matrix. Functionally, the electron transfer flavoprotein serves as a specific electron acceptor for several dehydrogenases, including five acyl-CoA dehydrogenases, glutaryl-CoA and sarcosine dehydrogenase. It transfers the electrons to the main mitochondrial respiratory chain via ETF-ubiquinone oxidoreductase (ETF dehydrogenase). This chain is Probable electron transfer flavoprotein subunit beta (CIR1), found in Saccharomyces cerevisiae (strain ATCC 204508 / S288c) (Baker's yeast).